The chain runs to 147 residues: Lysozyme C (147 aa).

The N-terminal stretch at 1–18 (MKVLLLLGFIFCSMAAHG) is a signal peptide. In terms of domain architecture, C-type lysozyme spans 19 to 147 (KRMERCEFAR…LSKYLEGCHL (129 aa)). Disulfide bonds link Cys-24-Cys-145, Cys-48-Cys-133, Cys-83-Cys-99, and Cys-95-Cys-113. Residues Glu-53 and Asp-71 contribute to the active site.

It belongs to the glycosyl hydrolase 22 family. As to quaternary structure, monomer.

It localises to the secreted. The catalysed reaction is Hydrolysis of (1-&gt;4)-beta-linkages between N-acetylmuramic acid and N-acetyl-D-glucosamine residues in a peptidoglycan and between N-acetyl-D-glucosamine residues in chitodextrins.. Its function is as follows. Lysozymes have primarily a bacteriolytic function; those in tissues and body fluids are associated with the monocyte-macrophage system and enhance the activity of immunoagents. In Trichosurus vulpecula (Brush-tailed possum), this protein is Lysozyme C (LYZ).